The primary structure comprises 396 residues: S-adenosylmethionine synthase 2 (396 aa).

E13 provides a ligand contact to Mg(2+). Residue H19 participates in ATP binding. E47 lines the K(+) pocket. 2 residues coordinate L-methionine: E60 and Q103. ATP is bound by residues 171–173 (DGK), 239–242 (SGRF), D250, 256–257 (RK), A273, K277, and K281. D250 contacts L-methionine. K281 contacts L-methionine.

Belongs to the AdoMet synthase family. Homotetramer. Mn(2+) is required as a cofactor. It depends on Mg(2+) as a cofactor. The cofactor is Co(2+). Requires K(+) as cofactor. In terms of tissue distribution, expressed in roots, stems and leaves (at protein level).

It is found in the cytoplasm. It carries out the reaction L-methionine + ATP + H2O = S-adenosyl-L-methionine + phosphate + diphosphate. It participates in amino-acid biosynthesis; S-adenosyl-L-methionine biosynthesis; S-adenosyl-L-methionine from L-methionine: step 1/1. Functionally, catalyzes the formation of S-adenosylmethionine from methionine and ATP. The reaction comprises two steps that are both catalyzed by the same enzyme: formation of S-adenosylmethionine (AdoMet) and triphosphate, and subsequent hydrolysis of the triphosphate. May be involved in the synthesis of betain in response to abiotic stress such as high salinity. This Atriplex nummularia (Old man saltbush) protein is S-adenosylmethionine synthase 2 (SAMS2).